Reading from the N-terminus, the 118-residue chain is MARIAGINIPDHKHAVIALTAIYGIGRTRAKAICAATAIAEDAKIKELSEAQIDTLREEVAKYTVEGDLRREVSMNIKRLMDLGCYRGLRHRRSLPLRGQRTKTNARTRKGPRKPIKK.

The tract at residues 94-118 (SLPLRGQRTKTNARTRKGPRKPIKK) is disordered.

Belongs to the universal ribosomal protein uS13 family. As to quaternary structure, part of the 30S ribosomal subunit. Forms a loose heterodimer with protein S19. Forms two bridges to the 50S subunit in the 70S ribosome.

In terms of biological role, located at the top of the head of the 30S subunit, it contacts several helices of the 16S rRNA. In the 70S ribosome it contacts the 23S rRNA (bridge B1a) and protein L5 of the 50S subunit (bridge B1b), connecting the 2 subunits; these bridges are implicated in subunit movement. Contacts the tRNAs in the A and P-sites. The sequence is that of Small ribosomal subunit protein uS13 from Shewanella amazonensis (strain ATCC BAA-1098 / SB2B).